Here is a 76-residue protein sequence, read N- to C-terminus: uncharacterized protein (76 aa).

A required for interaction with PPP3CA region spans residues 36-41; it reads PDIIIT. Phosphothreonine is present on residues Thr-44 and Thr-46.

As to quaternary structure, interacts (via PxIxIT motif, when phosphorylated on Thr-44) with PPP3CA. As to expression, not expressed in pancreatic duct cells (at protein level). Abundantly expressed in the pancreas and weakly expressed in the thyroid. Not expressed in pancreatic duct cells (at protein level). Abundantly expressed in the lymph node and weakly expressed in the stomach, trachea and bone marrow.

This is an uncharacterized protein from Homo sapiens (Human).